The sequence spans 308 residues: MPTTLLQSDLPGLPLRHRGKVRDVFDIPRERLPAGTPPGDYLLMVATDRLSAFDVVLPDPIPGKGEMLCQVSNFWFAKTAHLMPNHLTGIDVASVLPEGVDPALYAKRAVVTRKLKPVPVEAIARGYLIGSGWKDYQRTGKVSGIDLPDGLRQAEQLPEPIFTPSTKAAVGDHDENIDFDAMVKQVGAEMAERVRDATLRIYKFAADYARERGIILADTKFEFGTDADGRLYIMDEMLTPDSSRYWPADEYEVGTSPPSYDKQFVRDYLETLDWGKTAPGPTIPAEIIERTRAKYGEALQRLAGISVD.

Belongs to the SAICAR synthetase family.

It catalyses the reaction 5-amino-1-(5-phospho-D-ribosyl)imidazole-4-carboxylate + L-aspartate + ATP = (2S)-2-[5-amino-1-(5-phospho-beta-D-ribosyl)imidazole-4-carboxamido]succinate + ADP + phosphate + 2 H(+). Its pathway is purine metabolism; IMP biosynthesis via de novo pathway; 5-amino-1-(5-phospho-D-ribosyl)imidazole-4-carboxamide from 5-amino-1-(5-phospho-D-ribosyl)imidazole-4-carboxylate: step 1/2. In Stenotrophomonas maltophilia (strain R551-3), this protein is Phosphoribosylaminoimidazole-succinocarboxamide synthase.